Here is a 102-residue protein sequence, read N- to C-terminus: NADH-quinone oxidoreductase subunit K (102 aa).

3 consecutive transmembrane segments (helical) span residues 5 to 25 (LGHYLSLGAMLFALSVIGIFL), 31 to 51 (IVLLMAIELMLLAVNLNFVAF), and 62 to 82 (VFVFFILTVAAAESAIGLAIL).

This sequence belongs to the complex I subunit 4L family. NDH-1 is composed of 14 different subunits. Subunits NuoA, H, J, K, L, M, N constitute the membrane sector of the complex.

It is found in the cell inner membrane. It catalyses the reaction a quinone + NADH + 5 H(+)(in) = a quinol + NAD(+) + 4 H(+)(out). In terms of biological role, NDH-1 shuttles electrons from NADH, via FMN and iron-sulfur (Fe-S) centers, to quinones in the respiratory chain. The immediate electron acceptor for the enzyme in this species is believed to be ubiquinone. Couples the redox reaction to proton translocation (for every two electrons transferred, four hydrogen ions are translocated across the cytoplasmic membrane), and thus conserves the redox energy in a proton gradient. In Methylibium petroleiphilum (strain ATCC BAA-1232 / LMG 22953 / PM1), this protein is NADH-quinone oxidoreductase subunit K.